Reading from the N-terminus, the 46-residue chain is DNA-directed RNA polymerase subunit Rpo12 (46 aa).

Residues cysteine 8, cysteine 23, and cysteine 26 each coordinate Zn(2+).

It belongs to the archaeal Rpo12/eukaryotic RPC10 RNA polymerase subunit family. In terms of assembly, part of the RNA polymerase complex. Zn(2+) is required as a cofactor.

It is found in the cytoplasm. It carries out the reaction RNA(n) + a ribonucleoside 5'-triphosphate = RNA(n+1) + diphosphate. DNA-dependent RNA polymerase (RNAP) catalyzes the transcription of DNA into RNA using the four ribonucleoside triphosphates as substrates. The protein is DNA-directed RNA polymerase subunit Rpo12 of Archaeoglobus fulgidus (strain ATCC 49558 / DSM 4304 / JCM 9628 / NBRC 100126 / VC-16).